The primary structure comprises 439 residues: MEKVKIIGGGLAGSEAAWQLAKRKIPVEIYEMRPVVTTPVHKTEYLAELVCSNSFKSTELTNASGLLKEEMKKLDSLLLRVAEETRVPAGVALAVDRELFAKRVQEILLESPYVTVIREEVKKIPEEGIVIVATGPLTSSDFAEHLIEILDTDSLYFYDAVSPIIYADSINYEKVFSASRYGKGEEAYLNCPMTKEEYERFVEELVNAETVESHYPGEEKFFEGCLPIEVLARRGIDTLRYGPMKPVGLIDPKTGKEPYAVVQLRPENIQKTLYSMVGFQTRLKFQEQRRIFRMIPGLENAEFARYGVMHRNTYFYAPKFLKPTLQFIKNERVFFAGQLIGVEGYMESAAMGIVAGINAARLYKGKPLIILPPTTMIGALISYVTTKVPVKQFQPMNANWGILLPLERPVKDKKLRNRLLAERALRDLDDVIRRFAINV.

8-13 (GGGLAG) provides a ligand contact to FAD.

This sequence belongs to the MnmG family. TrmFO subfamily. Requires FAD as cofactor.

The protein resides in the cytoplasm. It carries out the reaction uridine(54) in tRNA + (6R)-5,10-methylene-5,6,7,8-tetrahydrofolate + NADH + H(+) = 5-methyluridine(54) in tRNA + (6S)-5,6,7,8-tetrahydrofolate + NAD(+). The enzyme catalyses uridine(54) in tRNA + (6R)-5,10-methylene-5,6,7,8-tetrahydrofolate + NADPH + H(+) = 5-methyluridine(54) in tRNA + (6S)-5,6,7,8-tetrahydrofolate + NADP(+). Catalyzes the folate-dependent formation of 5-methyl-uridine at position 54 (M-5-U54) in all tRNAs. This chain is Methylenetetrahydrofolate--tRNA-(uracil-5-)-methyltransferase TrmFO, found in Dictyoglomus thermophilum (strain ATCC 35947 / DSM 3960 / H-6-12).